The following is a 397-amino-acid chain: MPPIVNNLLENDLYKFTMWQALLHSHPEAQTEYEFVCRNAPAYPLSELKADVERELDHLCTLAFRDDELLYLRSLRFMKSDFVDFLTVFRFQRKFITVAADGPALRIRAIGPQVHVMGFEIFVLCIVNELYLRRFDQQASLTEARRRLQEKIRLLKNFGKEATRKNPFEFFDFGVRRRFSAAWHEEVVVTLAREVPQYFTGTSNVHLAKKYGLTPIGTMAHEYLQAYQSFGVRLRDFQKAALEDWVQEYRGDLGIALTDVVGMDAFLADFDLYFAKLFDGLRHDSGDPIEWGEKALAHYARLRIDAGSKRLVFSDALDLPGAFSLYRHFADRTLTGFGIGTNLSNDTGIPALNIVMKLMACNGQPVAKLSDSAGKTLCRDETFLAYLRQVFHHPAVK.

His-221 carries the post-translational modification Phosphohistidine; by autocatalysis.

It belongs to the NAPRTase family. Transiently phosphorylated on a His residue during the reaction cycle. Phosphorylation strongly increases the affinity for substrates and increases the rate of nicotinate D-ribonucleotide production. Dephosphorylation regenerates the low-affinity form of the enzyme, leading to product release.

The catalysed reaction is nicotinate + 5-phospho-alpha-D-ribose 1-diphosphate + ATP + H2O = nicotinate beta-D-ribonucleotide + ADP + phosphate + diphosphate. Its pathway is cofactor biosynthesis; NAD(+) biosynthesis; nicotinate D-ribonucleotide from nicotinate: step 1/1. Catalyzes the synthesis of beta-nicotinate D-ribonucleotide from nicotinate and 5-phospho-D-ribose 1-phosphate at the expense of ATP. The polypeptide is Nicotinate phosphoribosyltransferase (Herminiimonas arsenicoxydans).